Consider the following 309-residue polypeptide: NAD kinase (309 aa).

Asp89 serves as the catalytic Proton acceptor. NAD(+) is bound by residues 89 to 90 (DG), 163 to 164 (NE), His174, Arg191, Asp193, and 204 to 209 (TAYSLS).

It belongs to the NAD kinase family. Requires a divalent metal cation as cofactor.

The protein resides in the cytoplasm. The catalysed reaction is NAD(+) + ATP = ADP + NADP(+) + H(+). Its function is as follows. Involved in the regulation of the intracellular balance of NAD and NADP, and is a key enzyme in the biosynthesis of NADP. Catalyzes specifically the phosphorylation on 2'-hydroxyl of the adenosine moiety of NAD to yield NADP. This is NAD kinase from Shewanella frigidimarina (strain NCIMB 400).